A 227-amino-acid polypeptide reads, in one-letter code: Ribonuclease HII (227 aa).

The RNase H type-2 domain maps to 16-205 (SLLAGVDEVG…VKMALDAVGV (190 aa)). Positions 22, 23, and 114 each coordinate a divalent metal cation.

The protein belongs to the RNase HII family. Mn(2+) serves as cofactor. The cofactor is Mg(2+).

Its subcellular location is the cytoplasm. The enzyme catalyses Endonucleolytic cleavage to 5'-phosphomonoester.. Its function is as follows. Endonuclease that specifically degrades the RNA of RNA-DNA hybrids. The polypeptide is Ribonuclease HII (Marinobacter nauticus (strain ATCC 700491 / DSM 11845 / VT8) (Marinobacter aquaeolei)).